The primary structure comprises 77 residues: Conotoxin CaHr91 (77 aa).

The first 19 residues, 1–19, serve as a signal peptide directing secretion; sequence MKLTCALIITVLFLSITAD. The propeptide occupies 20 to 43; the sequence is DSRGKQGYRALKSIAGMLNSKTVR. Cystine bridges form between Cys-45–Cys-60, Cys-52–Cys-65, and Cys-59–Cys-74.

The protein belongs to the conotoxin O1 superfamily. Expressed by the venom duct.

Its subcellular location is the secreted. This chain is Conotoxin CaHr91, found in Conus capitaneus (Captain cone).